Consider the following 89-residue polypeptide: Large ribosomal subunit protein bL31B (89 aa).

The protein belongs to the bacterial ribosomal protein bL31 family. Type B subfamily. Part of the 50S ribosomal subunit.

This chain is Large ribosomal subunit protein bL31B, found in Actinobacillus pleuropneumoniae serotype 5b (strain L20).